Reading from the N-terminus, the 576-residue chain is Arginine--tRNA ligase (576 aa).

The short motif at 126–136 (ANPTGPMHIGH) is the 'HIGH' region element.

The protein belongs to the class-I aminoacyl-tRNA synthetase family. In terms of assembly, monomer.

The protein localises to the cytoplasm. The catalysed reaction is tRNA(Arg) + L-arginine + ATP = L-arginyl-tRNA(Arg) + AMP + diphosphate. The protein is Arginine--tRNA ligase of Rickettsia africae (strain ESF-5).